A 238-amino-acid chain; its full sequence is Pyridoxine 5'-phosphate synthase (238 aa).

Residue N7 coordinates 3-amino-2-oxopropyl phosphate. 9–10 (DH) lines the 1-deoxy-D-xylulose 5-phosphate pocket. R18 contributes to the 3-amino-2-oxopropyl phosphate binding site. Residue H43 is the Proton acceptor of the active site. The 1-deoxy-D-xylulose 5-phosphate site is built by R45 and H50. Catalysis depends on E70, which acts as the Proton acceptor. T100 serves as a coordination point for 1-deoxy-D-xylulose 5-phosphate. The active-site Proton donor is H191. 3-amino-2-oxopropyl phosphate is bound by residues G192 and 213 to 214 (GH).

Belongs to the PNP synthase family. As to quaternary structure, homooctamer; tetramer of dimers.

The protein resides in the cytoplasm. It catalyses the reaction 3-amino-2-oxopropyl phosphate + 1-deoxy-D-xylulose 5-phosphate = pyridoxine 5'-phosphate + phosphate + 2 H2O + H(+). Its pathway is cofactor biosynthesis; pyridoxine 5'-phosphate biosynthesis; pyridoxine 5'-phosphate from D-erythrose 4-phosphate: step 5/5. In terms of biological role, catalyzes the complicated ring closure reaction between the two acyclic compounds 1-deoxy-D-xylulose-5-phosphate (DXP) and 3-amino-2-oxopropyl phosphate (1-amino-acetone-3-phosphate or AAP) to form pyridoxine 5'-phosphate (PNP) and inorganic phosphate. This chain is Pyridoxine 5'-phosphate synthase, found in Thermosynechococcus vestitus (strain NIES-2133 / IAM M-273 / BP-1).